The primary structure comprises 299 residues: Probable lipid kinase YegS (299 aa).

Residues 2 to 133 (AEFPASLLIL…IDMAQVNKQT (132 aa)) form the DAGKc domain. ATP-binding positions include T40, 66–72 (GDGTINE), and T95. L215, D218, and L220 together coordinate Mg(2+). The Proton acceptor role is filled by E271.

It belongs to the diacylglycerol/lipid kinase family. YegS lipid kinase subfamily. It depends on Mg(2+) as a cofactor. Requires Ca(2+) as cofactor.

Its subcellular location is the cytoplasm. Probably phosphorylates lipids; the in vivo substrate is unknown. The chain is Probable lipid kinase YegS from Escherichia coli O127:H6 (strain E2348/69 / EPEC).